We begin with the raw amino-acid sequence, 315 residues long: Thioredoxin reductase (315 aa).

45–52 (EGSTPGGK) contributes to the FAD binding site. Cys145 and Cys148 are joined by a disulfide. FAD is bound at residue 288–297 (DCRSKHFRQI).

This sequence belongs to the class-II pyridine nucleotide-disulfide oxidoreductase family. As to quaternary structure, homodimer. The cofactor is FAD.

It localises to the cytoplasm. The catalysed reaction is [thioredoxin]-dithiol + NADP(+) = [thioredoxin]-disulfide + NADPH + H(+). This is Thioredoxin reductase (trxB) from Mycoplasma pneumoniae (strain ATCC 29342 / M129 / Subtype 1) (Mycoplasmoides pneumoniae).